Here is a 192-residue protein sequence, read N- to C-terminus: Erythropoietin (192 aa).

The first 25 residues, 1-25, serve as a signal peptide directing secretion; sequence MGARDCTPLLMLSFLLFPLGFPVLG. Disulfide bonds link Cys-32–Cys-187 and Cys-54–Cys-58. Residue Asn-49 is glycosylated (N-linked (GlcNAc...) asparagine). Residues Asn-63 and Asn-108 are each glycosylated (N-linked (GlcNAc...) asparagine).

Belongs to the EPO/TPO family. As to expression, produced by kidney or liver of adult mammals and by liver of fetal or neonatal mammals.

The protein localises to the secreted. Functionally, hormone involved in the regulation of erythrocyte proliferation and differentiation and the maintenance of a physiological level of circulating erythrocyte mass. Binds to EPOR leading to EPOR dimerization and JAK2 activation thereby activating specific downstream effectors, including STAT1 and STAT3. In Bos taurus (Bovine), this protein is Erythropoietin (EPO).